We begin with the raw amino-acid sequence, 144 residues long: Large ribosomal subunit protein uL13 (144 aa).

This sequence belongs to the universal ribosomal protein uL13 family. In terms of assembly, part of the 50S ribosomal subunit.

Its function is as follows. This protein is one of the early assembly proteins of the 50S ribosomal subunit, although it is not seen to bind rRNA by itself. It is important during the early stages of 50S assembly. The protein is Large ribosomal subunit protein uL13 of Mycoplasmopsis synoviae (strain 53) (Mycoplasma synoviae).